The chain runs to 445 residues: Tubulin beta-3 chain (445 aa).

Gln11, Glu69, Ser138, Gly142, Thr143, Gly144, Asn204, and Asn226 together coordinate GTP. Residue Glu69 coordinates Mg(2+). The span at 417–426 (DLVSEYQQYQ) shows a compositional bias: polar residues. Residues 417–445 (DLVSEYQQYQEASADDEADEFDEEEGDEE) form a disordered region. Over residues 429 to 445 (SADDEADEFDEEEGDEE) the composition is skewed to acidic residues.

Belongs to the tubulin family. As to quaternary structure, dimer of alpha and beta chains. A typical microtubule is a hollow water-filled tube with an outer diameter of 25 nm and an inner diameter of 15 nM. Alpha-beta heterodimers associate head-to-tail to form protofilaments running lengthwise along the microtubule wall with the beta-tubulin subunit facing the microtubule plus end conferring a structural polarity. Microtubules usually have 13 protofilaments but different protofilament numbers can be found in some organisms and specialized cells. It depends on Mg(2+) as a cofactor.

Its subcellular location is the cytoplasm. The protein resides in the cytoskeleton. In terms of biological role, tubulin is the major constituent of microtubules, a cylinder consisting of laterally associated linear protofilaments composed of alpha- and beta-tubulin heterodimers. Microtubules grow by the addition of GTP-tubulin dimers to the microtubule end, where a stabilizing cap forms. Below the cap, tubulin dimers are in GDP-bound state, owing to GTPase activity of alpha-tubulin. This Oomycete-like sp. (strain MacKay2000) protein is Tubulin beta-3 chain (TUBB3).